The following is a 162-amino-acid chain: Small ribosomal subunit protein uS13 (162 aa).

A disordered region spans residues Arg142–Lys162.

The protein belongs to the universal ribosomal protein uS13 family. Part of the 30S ribosomal subunit. Forms a loose heterodimer with protein S19. Forms two bridges to the 50S subunit in the 70S ribosome.

Functionally, located at the top of the head of the 30S subunit, it contacts several helices of the 16S rRNA. In the 70S ribosome it contacts the 23S rRNA (bridge B1a) and protein L5 of the 50S subunit (bridge B1b), connecting the 2 subunits; these bridges are implicated in subunit movement. The sequence is that of Small ribosomal subunit protein uS13 from Methanosarcina acetivorans (strain ATCC 35395 / DSM 2834 / JCM 12185 / C2A).